Reading from the N-terminus, the 151-residue chain is UPF0735 ACT domain-containing protein SH1278 (151 aa).

Residues 74–149 (TLILYVNDIV…HVSKVELISM (76 aa)) form the ACT domain.

This sequence belongs to the UPF0735 family.

The polypeptide is UPF0735 ACT domain-containing protein SH1278 (Staphylococcus haemolyticus (strain JCSC1435)).